The sequence spans 417 residues: Imidazolonepropionase (417 aa).

Fe(3+)-binding residues include H77 and H79. Positions 77 and 79 each coordinate Zn(2+). The 4-imidazolone-5-propanoate site is built by R86, Y149, and H182. Y149 is an N-formimidoyl-L-glutamate binding site. H244 lines the Fe(3+) pocket. Position 244 (H244) interacts with Zn(2+). Residue E247 coordinates 4-imidazolone-5-propanoate. Residue D323 coordinates Fe(3+). D323 provides a ligand contact to Zn(2+). Residue N325 participates in N-formimidoyl-L-glutamate binding.

Belongs to the metallo-dependent hydrolases superfamily. HutI family. Requires Zn(2+) as cofactor. Fe(3+) is required as a cofactor.

It is found in the cytoplasm. The enzyme catalyses 4-imidazolone-5-propanoate + H2O = N-formimidoyl-L-glutamate. Its pathway is amino-acid degradation; L-histidine degradation into L-glutamate; N-formimidoyl-L-glutamate from L-histidine: step 3/3. Catalyzes the hydrolytic cleavage of the carbon-nitrogen bond in imidazolone-5-propanoate to yield N-formimidoyl-L-glutamate. It is the third step in the universal histidine degradation pathway. This is Imidazolonepropionase from Halobacterium salinarum (strain ATCC 29341 / DSM 671 / R1).